The primary structure comprises 1088 residues: RNA-directed RNA polymerase (1088 aa).

A RdRp catalytic domain is found at 501–687 (LSYGDVTRFL…AKRYIAGGKI (187 aa)).

It belongs to the reoviridae RNA-directed RNA polymerase family. In terms of assembly, interacts with VP3 (Potential). Interacts with VP2; this interaction activates VP1. Interacts with NSP5; this interaction is probably necessary for the formation of functional virus factories. Interacts with NSP2; this interaction is weak. It depends on Mg(2+) as a cofactor.

Its subcellular location is the virion. It carries out the reaction RNA(n) + a ribonucleoside 5'-triphosphate = RNA(n+1) + diphosphate. Functionally, RNA-directed RNA polymerase that is involved in both transcription and genome replication. Together with VP3 capping enzyme, forms an enzyme complex positioned near the channels situated at each of the five-fold vertices of the core. Following infection, the outermost layer of the virus is lost, leaving a double-layered particle (DLP) made up of the core and VP6 shell. VP1 then catalyzes the transcription of fully conservative plus-strand genomic RNAs that are extruded through the DLP's channels into the cytoplasm where they function as mRNAs for translation of viral proteins. One copy of each of the viral (+)RNAs is also recruited during core assembly, together with newly synthesized polymerase complexes and VP2. The polymerase of these novo-formed particles catalyzes the synthesis of complementary minus-strands leading to dsRNA formation. To do so, the polymerase specifically recognizes and binds 4 bases 5'-UGUG-3' in the conserved 3'-sequence of plus-strand RNA templates. VP2 presumably activates the autoinhibited VP1-RNA complex to coordinate packaging and genome replication. Once dsRNA synthesis is complete, the polymerase switches to the transcriptional mode, thus providing secondary transcription. The protein is RNA-directed RNA polymerase of Homo sapiens (Human).